We begin with the raw amino-acid sequence, 287 residues long: 4-diphosphocytidyl-2-C-methyl-D-erythritol kinase (287 aa).

Lysine 22 is a catalytic residue. 102–112 (PAAAGIGGGSS) lines the ATP pocket. Residue aspartate 139 is part of the active site.

It belongs to the GHMP kinase family. IspE subfamily.

The catalysed reaction is 4-CDP-2-C-methyl-D-erythritol + ATP = 4-CDP-2-C-methyl-D-erythritol 2-phosphate + ADP + H(+). It participates in isoprenoid biosynthesis; isopentenyl diphosphate biosynthesis via DXP pathway; isopentenyl diphosphate from 1-deoxy-D-xylulose 5-phosphate: step 3/6. In terms of biological role, catalyzes the phosphorylation of the position 2 hydroxy group of 4-diphosphocytidyl-2C-methyl-D-erythritol. The protein is 4-diphosphocytidyl-2-C-methyl-D-erythritol kinase of Dinoroseobacter shibae (strain DSM 16493 / NCIMB 14021 / DFL 12).